Here is a 777-residue protein sequence, read N- to C-terminus: Aconitate hydratase, mitochondrial (777 aa).

Residues Q96 and 189-191 (DSH) each bind substrate. [4Fe-4S] cluster-binding residues include C383, C446, and C449. Residues R472, R477, R605, and 668 to 669 (SR) each bind substrate.

The protein belongs to the aconitase/IPM isomerase family. As to quaternary structure, monomer. [4Fe-4S] cluster serves as cofactor.

Its subcellular location is the mitochondrion. It carries out the reaction citrate = D-threo-isocitrate. Its pathway is carbohydrate metabolism; tricarboxylic acid cycle; isocitrate from oxaloacetate: step 2/2. Its function is as follows. Catalyzes the isomerization of citrate to isocitrate via cis-aconitate, a step in the citric acid cycle. The chain is Aconitate hydratase, mitochondrial (ACO1) from Candida albicans (strain SC5314 / ATCC MYA-2876) (Yeast).